The chain runs to 217 residues: 4-hydroxy-tetrahydrodipicolinate reductase (217 aa).

Residues 7-12 (GFKGKM), 71-73 (GTT), and 95-98 (SYNF) contribute to the NAD(+) site. Histidine 127 (proton donor/acceptor) is an active-site residue. Histidine 128 provides a ligand contact to (S)-2,3,4,5-tetrahydrodipicolinate. The active-site Proton donor is lysine 131. 137–138 (GT) contributes to the (S)-2,3,4,5-tetrahydrodipicolinate binding site.

Belongs to the DapB family.

It localises to the cytoplasm. It carries out the reaction (S)-2,3,4,5-tetrahydrodipicolinate + NAD(+) + H2O = (2S,4S)-4-hydroxy-2,3,4,5-tetrahydrodipicolinate + NADH + H(+). The catalysed reaction is (S)-2,3,4,5-tetrahydrodipicolinate + NADP(+) + H2O = (2S,4S)-4-hydroxy-2,3,4,5-tetrahydrodipicolinate + NADPH + H(+). It participates in amino-acid biosynthesis; L-lysine biosynthesis via DAP pathway; (S)-tetrahydrodipicolinate from L-aspartate: step 4/4. Functionally, catalyzes the conversion of 4-hydroxy-tetrahydrodipicolinate (HTPA) to tetrahydrodipicolinate. This chain is 4-hydroxy-tetrahydrodipicolinate reductase, found in Thermosipho africanus (strain TCF52B).